A 220-amino-acid polypeptide reads, in one-letter code: Glycerol-3-phosphate acyltransferase (220 aa).

The next 6 helical transmembrane spans lie at 11–31 (INVI…GYAL), 70–90 (LLVL…SKLF), 96–116 (LQWM…FLNF), 127–147 (GSVV…WFFV), 153–173 (ISSL…FFVP), and 193–213 (MVLI…NLLA).

Belongs to the PlsY family. In terms of assembly, probably interacts with PlsX.

The protein localises to the cell inner membrane. It catalyses the reaction an acyl phosphate + sn-glycerol 3-phosphate = a 1-acyl-sn-glycero-3-phosphate + phosphate. The protein operates within lipid metabolism; phospholipid metabolism. Its function is as follows. Catalyzes the transfer of an acyl group from acyl-phosphate (acyl-PO(4)) to glycerol-3-phosphate (G3P) to form lysophosphatidic acid (LPA). This enzyme utilizes acyl-phosphate as fatty acyl donor, but not acyl-CoA or acyl-ACP. This is Glycerol-3-phosphate acyltransferase from Helicobacter pylori (strain ATCC 700392 / 26695) (Campylobacter pylori).